Consider the following 132-residue polypeptide: Z-ring associated protein G (132 aa).

Residues 1-21 form a helical membrane-spanning segment; the sequence is MTWEYALIGLVVGIIIGAVAM. The interval 95–132 is disordered; that stretch reads FRNRLAESEASNDQAPVQMPRDYSEGASGLLRTGAKRD.

This sequence belongs to the ZapG family.

The protein localises to the cell inner membrane. Its function is as follows. Involved in cell division, cell envelope biogenesis and cell shape maintenance. The polypeptide is Z-ring associated protein G (Escherichia coli O157:H7).